Consider the following 368-residue polypeptide: Homoserine O-acetyltransferase (368 aa).

In terms of domain architecture, AB hydrolase-1 spans 44–350 (NAILVAHAWT…AYGHDAFLLE (307 aa)). Ser150 acts as the Nucleophile in catalysis. Arg217 contacts substrate. Active-site residues include Asp311 and His344. Asp345 contacts substrate.

It belongs to the AB hydrolase superfamily. MetX family. As to quaternary structure, homodimer.

Its subcellular location is the cytoplasm. It catalyses the reaction L-homoserine + acetyl-CoA = O-acetyl-L-homoserine + CoA. It participates in amino-acid biosynthesis; L-methionine biosynthesis via de novo pathway; O-acetyl-L-homoserine from L-homoserine: step 1/1. Its function is as follows. Transfers an acetyl group from acetyl-CoA to L-homoserine, forming acetyl-L-homoserine. This Geobacter sulfurreducens (strain ATCC 51573 / DSM 12127 / PCA) protein is Homoserine O-acetyltransferase.